The primary structure comprises 1098 residues: Contactin-5 (1098 aa).

An N-terminal signal peptide occupies residues 1–23 (MASCWRLILFLSVTRWLSDYSEA). Ig-like C2-type domains lie at 98-189 (PVFV…ATLQ), 195-281 (NFSG…RVLS), 299-384 (PKIE…GQLQ), 389-473 (PHWV…AELK), 479-568 (PSFE…LSVK), and 570-659 (PTRI…DSVS). A disulfide bridge connects residues Cys-122 and Cys-172. Asn-137 and Asn-195 each carry an N-linked (GlcNAc...) asparagine glycan. 2 cysteine pairs are disulfide-bonded: Cys-216/Cys-268 and Cys-321/Cys-368. Residues Asn-396, Asn-448, and Asn-539 are each glycosylated (N-linked (GlcNAc...) asparagine). 3 disulfides stabilise this stretch: Cys-410/Cys-457, Cys-502/Cys-550, and Cys-592/Cys-649. Fibronectin type-III domains are found at residues 672–770 (PPGV…TNEA), 775–872 (APSN…SAEG), 877–971 (APTD…TKRH), and 976–1066 (PPGN…SYSG). N-linked (GlcNAc...) asparagine glycosylation is found at Asn-778, Asn-815, and Asn-930. The interval 956-982 (GYGPPSREASTTTKRHPPREPPGNLRW) is disordered. Asn-1001 carries N-linked (GlcNAc...) asparagine glycosylation. Ser-1071 carries the GPI-anchor amidated serine lipid modification. Residues 1072–1098 (AQSTLHSLSKWSSVTLLLALMLPSSSW) constitute a propeptide, removed in mature form.

This sequence belongs to the immunoglobulin superfamily. Contactin family. Interacts with PTPRG. Expressed in the nervous system. Preferentially expressed in the central auditory pathways.

Its subcellular location is the cell membrane. Contactins mediate cell surface interactions during nervous system development. Has some neurite outgrowth-promoting activity in the cerebral cortical neurons but not in hippocampal neurons. Involved in neuronal activity in the auditory system. This chain is Contactin-5 (Cntn5), found in Mus musculus (Mouse).